A 226-amino-acid chain; its full sequence is ATP-dependent dethiobiotin synthetase BioD (226 aa).

12–17 (GVGKTV) serves as a coordination point for ATP. Thr16 serves as a coordination point for Mg(2+). Residue Lys37 is part of the active site. A substrate-binding site is contributed by Thr41. ATP is bound by residues Asp49, 108-111 (EGAG), 169-170 (GS), and 197-199 (PAG). Mg(2+)-binding residues include Asp49 and Glu108.

It belongs to the dethiobiotin synthetase family. In terms of assembly, homodimer. The cofactor is Mg(2+).

It localises to the cytoplasm. It catalyses the reaction (7R,8S)-7,8-diammoniononanoate + CO2 + ATP = (4R,5S)-dethiobiotin + ADP + phosphate + 3 H(+). It participates in cofactor biosynthesis; biotin biosynthesis; biotin from 7,8-diaminononanoate: step 1/2. Catalyzes a mechanistically unusual reaction, the ATP-dependent insertion of CO2 between the N7 and N8 nitrogen atoms of 7,8-diaminopelargonic acid (DAPA, also called 7,8-diammoniononanoate) to form a ureido ring. This chain is ATP-dependent dethiobiotin synthetase BioD, found in Mycobacterium bovis (strain ATCC BAA-935 / AF2122/97).